A 239-amino-acid polypeptide reads, in one-letter code: Secreted effector CFEM9 (239 aa).

Positions 1–18 (MRVLKFLSLMAMLGCTIG) are cleaved as a signal peptide. One can recognise a CFEM domain in the interval 19–125 (QSGSATPGSL…DALRRREDEY (107 aa)). Disulfide bonds link C43–C82, C47–C77, C57–C63, and C65–C98. D60 lines the heme pocket. The span at 187-199 (KSATTTEATRNTV) shows a compositional bias: polar residues. The interval 187–216 (KSATTTEATRNTVPASTTAPSPSPQLYTGN) is disordered. The GPI-anchor amidated glycine moiety is linked to residue G215. N216 carries an N-linked (GlcNAc...) asparagine glycan. A propeptide spans 216-239 (NASTSRATVSLTVVLTVAAVYLVL) (removed in mature form).

It belongs to the RBT5 family.

The protein localises to the cell membrane. Its subcellular location is the secreted. It is found in the host nucleus. The protein resides in the host cell membrane. In terms of biological role, appears to function during host infection, and may play a role in suppressing the host immune response. This chain is Secreted effector CFEM9, found in Marssonina brunnea f. sp. multigermtubi (strain MB_m1) (Marssonina leaf spot fungus).